Here is a 260-residue protein sequence, read N- to C-terminus: Ribonuclease HII (260 aa).

The region spanning 71-259 (ELVAGVDEVG…VHDAIVNKKN (189 aa)) is the RNase H type-2 domain. A divalent metal cation contacts are provided by Asp77, Glu78, and Asp169.

The protein belongs to the RNase HII family. Requires Mn(2+) as cofactor. It depends on Mg(2+) as a cofactor.

The protein resides in the cytoplasm. It catalyses the reaction Endonucleolytic cleavage to 5'-phosphomonoester.. Functionally, endonuclease that specifically degrades the RNA of RNA-DNA hybrids. This chain is Ribonuclease HII, found in Leuconostoc citreum (strain KM20).